The chain runs to 326 residues: Vitamin B12 import system permease protein BtuC (326 aa).

A run of 9 helical transmembrane segments spans residues 15–35, 61–81, 88–108, 112–132, 146–166, 184–204, 240–260, 274–294, and 302–322; these read WLLC…CAGE, LAVL…QALF, PGLL…VLLG, LPNW…TLIL, LLAG…AIYF, GGVD…LLWI, GWMV…GLVI, VLLP…DIVA, and ELPI…WLLL.

Belongs to the binding-protein-dependent transport system permease family. FecCD subfamily. In terms of assembly, the complex is composed of two ATP-binding proteins (BtuD), two transmembrane proteins (BtuC) and a solute-binding protein (BtuF).

It localises to the cell inner membrane. Functionally, part of the ABC transporter complex BtuCDF involved in vitamin B12 import. Involved in the translocation of the substrate across the membrane. This Escherichia coli O9:H4 (strain HS) protein is Vitamin B12 import system permease protein BtuC.